The following is a 97-amino-acid chain: MASNSRSSISPWTFSQNKMFERALAVYDKDTPDRWHNVAKAVGGKTVEEVKRHYDILVEDLINIETGRVPLPNYKTFESNSRSINDFDTRKMKNLKI.

An SANT domain is found at 7–59 (SSISPWTFSQNKMFERALAVYDKDTPDRWHNVAKAVGGKTVEEVKRHYDILVE).

As to expression, expressed in the micropylar endosperm surrounding globular-stage embryos but no expression was detected elsewhere, including floral tissues.

The protein localises to the nucleus. Probable transcription factor. In Arabidopsis thaliana (Mouse-ear cress), this protein is Protein RADIALIS-like 6 (RL6).